The sequence spans 770 residues: Elongation factor G, mitochondrial (770 aa).

The transit peptide at 1-24 (MLKLSFRSLTSRLPRLSTLVVRGY) directs the protein to the mitochondrion. Residues 57 to 353 (KQIRNIGISA…AVCDYLPNPS (297 aa)) form the tr-type G domain. GTP contacts are provided by residues 66–73 (AHIDSGKT), 151–155 (DTPGH), and 205–208 (NKMD).

This sequence belongs to the TRAFAC class translation factor GTPase superfamily. Classic translation factor GTPase family. EF-G/EF-2 subfamily.

It localises to the mitochondrion. The protein operates within protein biosynthesis; polypeptide chain elongation. Mitochondrial GTPase that catalyzes the GTP-dependent ribosomal translocation step during translation elongation. During this step, the ribosome changes from the pre-translocational (PRE) to the post-translocational (POST) state as the newly formed A-site-bound peptidyl-tRNA and P-site-bound deacylated tRNA move to the P and E sites, respectively. Catalyzes the coordinated movement of the two tRNA molecules, the mRNA and conformational changes in the ribosome. In Schizosaccharomyces pombe (strain 972 / ATCC 24843) (Fission yeast), this protein is Elongation factor G, mitochondrial (mef1).